The following is a 1844-amino-acid chain: Non-structural replication polyprotein (1844 aa).

Residues Ser58–Leu219 enclose the Alphavirus-like MT domain. The disordered stretch occupies residues Thr571–Asp739. Composition is skewed to low complexity over residues Ser609 to Ala621 and Leu726 to Leu736. The OTU domain occupies Ser728–Ser879. Positions Gln730 to Lys884 constitute a Peptidase C21 domain. Cys783 serves as the catalytic For protease activity. A disordered region spans residues Asp859–Pro887. Positions Gly865–Pro867 match the GPP flap motif. Catalysis depends on His869, which acts as the For protease activity. The 158-residue stretch at Thr946–Cys1103 folds into the (+)RNA virus helicase ATP-binding domain. Gly976–Thr983 is an ATP binding site. One can recognise a (+)RNA virus helicase C-terminal domain in the interval Trp1104–Pro1236. A RdRp catalytic domain is found at Thr1572–Trp1678.

It belongs to the Tymoviridae non-structural replication polyprotein family. Interacts with host ubiquitin. Specific enzymatic cleavages by the host yield mature proteins.

It localises to the host chloroplast envelope. It catalyses the reaction Thiol-dependent hydrolysis of ester, thioester, amide, peptide and isopeptide bonds formed by the C-terminal Gly of ubiquitin (a 76-residue protein attached to proteins as an intracellular targeting signal).. The enzyme catalyses RNA(n) + a ribonucleoside 5'-triphosphate = RNA(n+1) + diphosphate. Functionally, acts as a cysteine protease, methyltransferase and deubiquitinase. The cysteine protease activity cleaves the polyprotein giving rise to mature proteins. The protease has the ability to process substrates in trans. The methyltransferase domain is probably involved in viral RNA capping. The deubiquitylating activity counteracts the degradation of the viral polymerase mediated by the host ubiquitin-proteasome system. The polymerase is thus stabilized and infectivity is increased. Favors K63 poly-Ub linkage. In terms of biological role, RNA-directed RNA polymerase is responsible for the replication and transcription of the genome. In Turnip yellow mosaic virus, this protein is Non-structural replication polyprotein.